Consider the following 251-residue polypeptide: Lactose phosphotransferase system repressor (251 aa).

The 56-residue stretch at 3-58 (KHERLDEIAKLVNKKGTIRTNEIVEGLNVSDMTVRRDLIELENKGILTKIHGGARS) folds into the HTH deoR-type domain. Positions 20-39 (IRTNEIVEGLNVSDMTVRRD) form a DNA-binding region, H-T-H motif.

Its function is as follows. Repressor of the lactose catabolism operon. Galactose-6-phosphate is the inducer. The polypeptide is Lactose phosphotransferase system repressor (lacR) (Staphylococcus aureus (strain N315)).